Consider the following 120-residue polypeptide: Large ribosomal subunit protein uL18 (120 aa).

Belongs to the universal ribosomal protein uL18 family. In terms of assembly, part of the 50S ribosomal subunit; part of the 5S rRNA/L5/L18/L25 subcomplex. Contacts the 5S and 23S rRNAs.

Its function is as follows. This is one of the proteins that bind and probably mediate the attachment of the 5S RNA into the large ribosomal subunit, where it forms part of the central protuberance. This chain is Large ribosomal subunit protein uL18, found in Staphylococcus haemolyticus (strain JCSC1435).